The chain runs to 287 residues: 2-dehydro-3-deoxyphosphooctonate aldolase (287 aa).

Belongs to the KdsA family.

The protein resides in the cytoplasm. The enzyme catalyses D-arabinose 5-phosphate + phosphoenolpyruvate + H2O = 3-deoxy-alpha-D-manno-2-octulosonate-8-phosphate + phosphate. Its pathway is carbohydrate biosynthesis; 3-deoxy-D-manno-octulosonate biosynthesis; 3-deoxy-D-manno-octulosonate from D-ribulose 5-phosphate: step 2/3. The protein operates within bacterial outer membrane biogenesis; lipopolysaccharide biosynthesis. The protein is 2-dehydro-3-deoxyphosphooctonate aldolase of Nitrobacter winogradskyi (strain ATCC 25391 / DSM 10237 / CIP 104748 / NCIMB 11846 / Nb-255).